The sequence spans 566 residues: Acetyl-coenzyme A carboxylase carboxyl transferase subunits beta/alpha (566 aa).

An acetyl-coenzyme A carboxylase carboxyl transferase subunit beta region spans residues 1–243; it reads MNPTTPRGGQ…QTAEFLLRHG (243 aa). One can recognise a CoA carboxyltransferase N-terminal domain in the interval 11–280; it reads LWSRCGGCAS…PVGAGHESEC (270 aa). The carboxyltransferase stretch occupies residues 11–534; that stretch reads LWSRCGGCAS…REAVLAHLVP (524 aa). Zn(2+)-binding residues include C15, C18, C34, and C37. The segment at 244–557 is acetyl-coenzyme A carboxylase carboxyl transferase subunit alpha; the sequence is QVDLVVPRHA…RRRFRRFGAA (314 aa). A disordered region spans residues 268-295; sequence GREPVGAGHESECPPVDGSSTQERGADK. One can recognise a CoA carboxyltransferase C-terminal domain in the interval 282–534; sequence PVDGSSTQER…REAVLAHLVP (253 aa).

The protein in the N-terminal section; belongs to the AccD/PCCB family. It in the C-terminal section; belongs to the AccA family. Acetyl-CoA carboxylase is a heterotetramer composed of biotin carboxyl carrier protein (AccB), biotin carboxylase (AccC) and two subunits of ACCase subunit beta/alpha. Zn(2+) serves as cofactor.

The protein resides in the cytoplasm. The enzyme catalyses N(6)-carboxybiotinyl-L-lysyl-[protein] + acetyl-CoA = N(6)-biotinyl-L-lysyl-[protein] + malonyl-CoA. The protein operates within lipid metabolism; malonyl-CoA biosynthesis; malonyl-CoA from acetyl-CoA: step 1/1. In terms of biological role, component of the acetyl coenzyme A carboxylase (ACC) complex. Biotin carboxylase (BC) catalyzes the carboxylation of biotin on its carrier protein (BCCP) and then the CO(2) group is transferred by the transcarboxylase to acetyl-CoA to form malonyl-CoA. The polypeptide is Acetyl-coenzyme A carboxylase carboxyl transferase subunits beta/alpha (accD) (Salinispora tropica (strain ATCC BAA-916 / DSM 44818 / JCM 13857 / NBRC 105044 / CNB-440)).